The primary structure comprises 427 residues: Pectin acetylesterase 5 (427 aa).

Positions M1–S35 are cleaved as a signal peptide. N173 is a glycosylation site (N-linked (GlcNAc...) asparagine). Catalysis depends on charge relay system residues S209, D305, and H372. N391 carries an N-linked (GlcNAc...) asparagine glycan.

It belongs to the pectinacetylesterase family.

The protein localises to the secreted. It is found in the cell wall. Hydrolyzes acetyl esters in homogalacturonan regions of pectin. In type I primary cell wall, galacturonic acid residues of pectin can be acetylated at the O-2 and O-3 positions. Decreasing the degree of acetylation of pectin gels in vitro alters their physical properties. The protein is Pectin acetylesterase 5 of Arabidopsis thaliana (Mouse-ear cress).